Reading from the N-terminus, the 151-residue chain is Epigen (151 aa).

The signal sequence occupies residues 1-18 (MAFGMLIYILLKAMGALS). Residues 19–108 (EEAALTASSL…NSYAHNSYER (90 aa)) are Extracellular-facing. Asn39 is a glycosylation site (N-linked (GlcNAc...) asparagine). One can recognise an EGF-like domain in the interval 54–94 (LMQTCLEEHHSYCINGLCAFHSELRKPICKCLAGYNGERCE). 3 cysteine pairs are disulfide-bonded: Cys58-Cys71, Cys66-Cys82, and Cys84-Cys93. A helical transmembrane segment spans residues 109-129 (YIAVGIGIGILTSGILAIIYC). Topologically, residues 130-151 (YVRKRCRKLKSPYKVCMGETAL) are cytoplasmic.

The protein localises to the membrane. Functionally, promotes the growth of epithelial cells. The chain is Epigen (EPGN) from Gallus gallus (Chicken).